A 302-amino-acid polypeptide reads, in one-letter code: Protein transport protein SEC13 homolog B (302 aa).

WD repeat units follow at residues 9-48, 54-95, 101-142, 148-201, 208-251, and 257-296; these read GHEDIVHDVQMDYYGKRIATASSDCTIKITGVSNNGGSQQ, GHRG…QWTQ, DHKS…GWDT, AHPV…WKMD, KHTD…EQWE, and DFMTPVWRVSWSLTGNLLAVSDGNNNVTVWKEAVDGEWEQ.

Belongs to the WD repeat SEC13 family. As to quaternary structure, part of the nuclear pore complex (NPC). The NPC has an eight-fold symmetrical structure comprising a central transport channel and two rings, the cytoplasmic and nuclear rings, to which eight filaments are attached. The cytoplasmic filaments have loose ends, while the nuclear filaments are joined in a distal ring, forming a nuclear basket. NPCs are highly dynamic in configuration and composition, and can be devided in 3 subcomplexes, the NUP62 subcomplex, the NUP107-160 subcomplex and the NUP93 subcomplex, containing approximately 30 different nucleoporin proteins. Interacts with MAG5, SEC31A and SEC31B.

It is found in the golgi apparatus. It localises to the endoplasmic reticulum. The protein resides in the nucleus envelope. The protein localises to the nucleus. Its subcellular location is the nuclear pore complex. Its function is as follows. Required for protein transport from the endoplasmic reticulum to the Golgi apparatus. The chain is Protein transport protein SEC13 homolog B from Arabidopsis thaliana (Mouse-ear cress).